The following is a 193-amino-acid chain: Signal peptidase I (193 aa).

Residues 1–25 (MTEEQKPTSEKSVKRKSNTYWEWGK) are Cytoplasmic-facing. The chain crosses the membrane as a helical span at residues 26–42 (AIIIAVALALLIRHFLF). Topologically, residues 43-193 (EPYLVEGSSM…FPFHDMRQTK (151 aa)) are extracellular. Residues S51 and K93 contribute to the active site.

Belongs to the peptidase S26 family.

It localises to the cell membrane. The enzyme catalyses Cleavage of hydrophobic, N-terminal signal or leader sequences from secreted and periplasmic proteins.. This chain is Signal peptidase I (sipS2), found in Bacillus amyloliquefaciens (Bacillus velezensis).